The following is a 487-amino-acid chain: METVQLRNPPRRQLKKLDEDSLTKQPEEVFDVLEKLGEGSYGSVYKAIHKETGQIVAIKQVPVESDLQEIIKEISIMQQCDSPHVVKYYGSYFKNTDLWIVMEYCGAGSVSDIIRLRNKTLTEDEIATILQSTLKGLEYLHFMRKIHRDIKAGNILLNTEGHAKLADFGVAGQLTDTMAKRNTVIGTPFWMAPEVIQEIGYNCVADIWSLGITAIEMAEGKPPYADIHPMRAIFMIPTNPPPTFRKPELWSDNFMDFVKQCLVKSPEQRATATQLLQHPFVKSAKGVSILRDLINEAMDVKLKRQEAQQREVDQDDEENSEEDEMDSGTMVRAAGDEMGTVRVASTMSGGANTMIEHGDTLPSQLGTMVINTEDEEEEGTMKRRDETMQPAKPSFLEYFEQKEKENQINSFGKNVSGSLKNSSDWKIPQDGDYEFLKSWTVEDLQKRLLALDPMMEQEMEEIRQKYRSKRQPILDAIEAKKRRQQNF.

M1 carries the N-acetylmethionine modification. Residue T3 is modified to Phosphothreonine. The Protein kinase domain maps to 30 to 281 (FDVLEKLGEG…ATQLLQHPFV (252 aa)). ATP contacts are provided by residues 36-44 (LGEGSYGSV) and K59. The Proton acceptor role is filled by D149. T183 is modified (phosphothreonine; by autocatalysis). Residue S265 is modified to Phosphoserine. Residues 289-311 (ILRDLINEAMDVKLKRQEAQQRE) are a coiled coil. The tract at residues 305–334 (QEAQQREVDQDDEENSEEDEMDSGTMVRAA) is disordered. Residues 313 to 326 (DQDDEENSEEDEMD) are compositionally biased toward acidic residues. Phosphoserine is present on S320. Phosphothreonine occurs at positions 340 and 367. T387 is modified (phosphothreonine; by PKB/AKT1). A Phosphoserine modification is found at S410. Residue Y433 is modified to Phosphotyrosine. The SARAH domain maps to 433 to 480 (YEFLKSWTVEDLQKRLLALDPMMEQEMEEIRQKYRSKRQPILDAIEAK).

Belongs to the protein kinase superfamily. STE Ser/Thr protein kinase family. STE20 subfamily. Homodimer; mediated via the coiled-coil region. Interacts with NORE1, which inhibits autoactivation. Interacts with and stabilizes SAV1. Interacts with RASSF1. Interacts with FOXO3. Interacts with RASSF2 (via SARAH domain). Interacts with AR, PKB/AKT1, TNNI3 and SIRT1. Interacts with MARK3 and SCRIB in the presence of DLG5. Interacts with DLG5 (via PDZ domain 3). Requires Mg(2+) as cofactor. Post-translationally, autophosphorylated on serine and threonine residues. Phosphorylation at Thr-387 by PKB/AKT1, leads to inhibition of its: kinase activity, nuclear translocation and autophosphorylation at Thr-183. It also diminishes its cleavage by caspases and its ability to phosphorylate FOXO3. In terms of processing, proteolytically cleaved by caspase-3 during apoptosis at Asp-326 resulting in a 37 kDa form. Proteolytic cleavage results in kinase activation and nuclear translocation of the truncated form (MST1/N).

It localises to the cytoplasm. Its subcellular location is the nucleus. It catalyses the reaction L-seryl-[protein] + ATP = O-phospho-L-seryl-[protein] + ADP + H(+). The enzyme catalyses L-threonyl-[protein] + ATP = O-phospho-L-threonyl-[protein] + ADP + H(+). Its activity is regulated as follows. Inhibited by the C-terminal non-catalytic region. Activated by caspase-cleavage. Full activation also requires homodimerization and autophosphorylation of Thr-183. Activated by RASSF1 which acts by preventing its dephosphorylation. In terms of biological role, stress-activated, pro-apoptotic kinase which, following caspase-cleavage, enters the nucleus and induces chromatin condensation followed by internucleosomal DNA fragmentation. Key component of the Hippo signaling pathway which plays a pivotal role in organ size control and tumor suppression by restricting proliferation and promoting apoptosis. The core of this pathway is composed of a kinase cascade wherein STK3/MST2 and STK4/MST1, in complex with its regulatory protein SAV1, phosphorylates and activates LATS1/2 in complex with its regulatory protein MOB1, which in turn phosphorylates and inactivates YAP1 oncoprotein and WWTR1/TAZ. Phosphorylation of YAP1 by LATS2 inhibits its translocation into the nucleus to regulate cellular genes important for cell proliferation, cell death, and cell migration. STK3/MST2 and STK4/MST1 are required to repress proliferation of mature hepatocytes, to prevent activation of facultative adult liver stem cells (oval cells), and to inhibit tumor formation. Phosphorylates 'Ser-14' of histone H2B (H2BS14ph) during apoptosis. Phosphorylates FOXO3 upon oxidative stress, which results in its nuclear translocation and cell death initiation. Phosphorylates MOBKL1A, MOBKL1B and RASSF2. Phosphorylates TNNI3 (cardiac Tn-I) and alters its binding affinity to TNNC1 (cardiac Tn-C) and TNNT2 (cardiac Tn-T). Phosphorylates FOXO1 on 'Ser-212' and regulates its activation and stimulates transcription of PMAIP1 in a FOXO1-dependent manner. Phosphorylates SIRT1 and inhibits SIRT1-mediated p53/TP53 deacetylation, thereby promoting p53/TP53 dependent transcription and apoptosis upon DNA damage. Acts as an inhibitor of PKB/AKT1. Phosphorylates AR on 'Ser-650' and suppresses its activity by intersecting with PKB/AKT1 signaling and antagonizing formation of AR-chromatin complexes. The sequence is that of Serine/threonine-protein kinase 4 (Stk4) from Mus musculus (Mouse).